The sequence spans 255 residues: L-erythrulose-1-phosphate isomerase (255 aa).

The active-site Electrophile is the His98. Glu171 acts as the Proton acceptor in catalysis. 2 residues coordinate substrate: Gly177 and Ser214.

Belongs to the triosephosphate isomerase family. Homodimer.

The protein localises to the cytoplasm. It carries out the reaction L-erythrulose 1-phosphate = D-erythrulose 4-phosphate. The protein operates within carbohydrate metabolism; erythritol degradation. Its function is as follows. Catalyzes the isomerization of D-erythrulose-4P to L-erythrulose-1P. This chain is L-erythrulose-1-phosphate isomerase, found in Rhizobium meliloti (strain 1021) (Ensifer meliloti).